The primary structure comprises 772 residues: MAAESALQVVEKLQARLAANPDPKKLLKYLKKLSTLPITVDILAETGVGKTVNSLRKHEHVGSFARDLVAQWKKLVPVERNAEPDEQDFEKSNSRKRPRDALQKEEEMEGDYQETWKATGSRSYSPDHRQKKHRKLSELERPHKVSHGHERRDERKRCHRMSPTYSSDPESSDYGHVQSPPSCTSPHQMYVDHYRSLEEDQEPIVSHQKPGKGHSNAFQDRLGASQERHLGEPHGKGVVSQNKEHKSSHKDKRPVDAKSDEKASVVSREKSHKALSKEENRRPPSGDNAREKPPSSGVKKEKDREGSSLKKKCLPPSEAASDNHLKKPKHRDPEKAKLDKSKQGLDSFDTGKGAGDLLPKVKEKGSNNLKTPEGKVKTNLDRKSLGSLPKVEETDMEDEFEQPTMSFESYLSYDQPRKKKKKIVKTSATALGDKGLKKNDSKSTGKNLDSVQKLPKVNKTKSEKPAGADLAKLRKVPDVLPVLPDLPLPAIQANYRPLPSLELISSFQPKRKAFSSPQEEEEAGFTGRRMNSKMQVYSGSKCAYLPKMMTLHQQCIRVLKNNIDSIFEVGGVPYSVLEPVLERCTPDQLYRIEEYNHVLIEETDQLWKVHCHRDFKEERPEEYESWREMYLRLQDAREQRLRVLTKNIQFAHANKPKGRQAKMAFVNSVAKPPRDVRRRQEKFGTGGAAVPEKIKIKPAPYPMGSSHASASSISFNPSPEEPAYDGPSTSSAHLAPVVSSTVSYDPRKPTVKKIAPMMAKTIKAFKNRFSRR.

The TFIIS N-terminal domain maps to 4–79 (ESALQVVEKL…AQWKKLVPVE (76 aa)). Composition is skewed to basic and acidic residues over residues 79-105 (ERNA…LQKE) and 136-156 (LSEL…DERK). Disordered regions lie at residues 79–403 (ERNA…FEQP) and 418–466 (KKKK…EKPA). Residue S196 is modified to Phosphoserine. 5 stretches are compositionally biased toward basic and acidic residues: residues 226-235 (QERHLGEPHG), 253-269 (RPVD…VSRE), 275-308 (LSKE…EGSS), 321-343 (SDNH…KSKQ), and 372-384 (PEGK…DRKS). S384 and S387 each carry phosphoserine. Residue T394 is modified to Phosphothreonine. An N6-acetyllysine modification is found at K434. The span at 434–443 (KGLKKNDSKS) shows a compositional bias: basic and acidic residues. Residue S516 is modified to Phosphoserine. Residues 522–681 (EAGFTGRRMN…PPRDVRRRQE (160 aa)) form an activation domain region. Positions 550 to 559 (TLHQQCIRVL) are BC-box. One can recognise an F-box domain in the interval 566-610 (IFEVGGVPYSVLEPVLERCTPDQLYRIEEYNHVLIEETDQLWKVH). Positions 674–732 (RDVRRRQEKFGTGGAAVPEKIKIKPAPYPMGSSHASASSISFNPSPEEPAYDGPSTSSA) are disordered. The span at 705–714 (SSHASASSIS) shows a compositional bias: low complexity.

In terms of assembly, heterotrimer of an A (ELOA, ELOA2 or ELOA3P), ELOB and ELOC subunit. Part of a multisubunit ubiquitin ligase complex consisting of elongin BC complex (ELOB and ELOC), elongin A/ELOA, RBX1 and CUL5. Interacts with ERCC6; the interaction is induced by DNA damaging agents or inhibitors of RNA polymerase II elongation. Interacts (via BC-box) with CUL5.

The protein resides in the nucleus. In terms of biological role, SIII, also known as elongin, is a general transcription elongation factor that increases the RNA polymerase II transcription elongation past template-encoded arresting sites. Subunit A is transcriptionally active and its transcription activity is strongly enhanced by binding to the dimeric complex of the SIII regulatory subunits B and C (elongin BC complex). Functionally, as part of a multisubunit complex composed of elongin BC complex (ELOB and ELOC), elongin A/ELOA, RBX1 and CUL5; polyubiquitinates monoubiquitinated POLR2A. This is Elongin-A from Homo sapiens (Human).